Here is an 875-residue protein sequence, read N- to C-terminus: SPbeta prophage-derived uncharacterized protein YomG (875 aa).

The stretch at 351–381 (AKKAEISRINSQITNISQEIEKLKDRLSMDK) forms a coiled coil. The 112-residue stretch at 537-648 (PVANPTILNN…SIDSSGRILS (112 aa)) folds into the Fibronectin type-III domain.

The protein is SPbeta prophage-derived uncharacterized protein YomG (yomG) of Bacillus subtilis (strain 168).